The sequence spans 356 residues: D-alanine--D-alanine ligase (356 aa).

The region spanning 134–339 (KQLFAHRGLP…YADLITKLIE (206 aa)) is the ATP-grasp domain. 167-222 (KDKLEFPVFVKPANLGSSVGISKCNNEEELKSGIEEAFQFDRKLVIEQGIEAREIE) is an ATP binding site. Positions 293, 306, and 308 each coordinate Mg(2+).

Belongs to the D-alanine--D-alanine ligase family. The cofactor is Mg(2+). Mn(2+) serves as cofactor.

It localises to the cytoplasm. It carries out the reaction 2 D-alanine + ATP = D-alanyl-D-alanine + ADP + phosphate + H(+). The protein operates within cell wall biogenesis; peptidoglycan biosynthesis. Its function is as follows. Cell wall formation. The protein is D-alanine--D-alanine ligase of Staphylococcus carnosus (strain TM300).